We begin with the raw amino-acid sequence, 117 residues long: Protein RALF-like 27 (117 aa).

The signal sequence occupies residues 1-27; it reads MTKTFFSFSFFFTSSLLLLLAATSATA. Residues 28–71 constitute a propeptide, removed in mature form; that stretch reads STGNVTSGLRYDGCAPGDTVGECITATVEEEDEEGVEAVVRRIL. The N-linked (GlcNAc...) asparagine glycan is linked to Asn-31. Intrachain disulfides connect Cys-88/Cys-96 and Cys-107/Cys-113.

This sequence belongs to the plant rapid alkalinization factor (RALF) family.

Its subcellular location is the secreted. Cell signaling peptide that may regulate plant stress, growth, and development. Mediates a rapid alkalinization of extracellular space by mediating a transient increase in the cytoplasmic Ca(2+) concentration leading to a calcium-dependent signaling events through a cell surface receptor and a concomitant activation of some intracellular mitogen-activated protein kinases. The chain is Protein RALF-like 27 (RALFL27) from Arabidopsis thaliana (Mouse-ear cress).